The chain runs to 271 residues: Ribosomal RNA small subunit methyltransferase A (271 aa).

S-adenosyl-L-methionine contacts are provided by His-11, Leu-13, Gly-38, Glu-58, Asp-86, and Asn-101.

Belongs to the class I-like SAM-binding methyltransferase superfamily. rRNA adenine N(6)-methyltransferase family. RsmA subfamily.

Its subcellular location is the cytoplasm. The catalysed reaction is adenosine(1518)/adenosine(1519) in 16S rRNA + 4 S-adenosyl-L-methionine = N(6)-dimethyladenosine(1518)/N(6)-dimethyladenosine(1519) in 16S rRNA + 4 S-adenosyl-L-homocysteine + 4 H(+). Functionally, specifically dimethylates two adjacent adenosines (A1518 and A1519) in the loop of a conserved hairpin near the 3'-end of 16S rRNA in the 30S particle. May play a critical role in biogenesis of 30S subunits. The polypeptide is Ribosomal RNA small subunit methyltransferase A (Helicobacter acinonychis (strain Sheeba)).